The primary structure comprises 439 residues: Structure-specific endonuclease subunit SLX1 homolog (439 aa).

Disordered stretches follow at residues 1–28 and 117–140; these read METF…GVPK and DDDD…LRAL. Over residues 125-136 the composition is skewed to basic and acidic residues; that stretch reads ESSTEHADDDLN. Residues 166–253 form the GIY-YIG domain; it reads EFYGVYCLIS…PAVSKSLKEK (88 aa). The segment at 335 to 390 adopts an SLX1-type zinc-finger fold; that stretch reads CRLCGKDIEKLWGLVRCISQSCHSHFHSKCLAEHGLKNKNEYADQIYPLKSNCPIC.

It belongs to the SLX1 family. In terms of assembly, forms a heterodimer with him-18/slx-4. It depends on a divalent metal cation as a cofactor.

It localises to the nucleus. Its function is as follows. Catalytic subunit of a heterodimeric structure-specific endonuclease that resolves DNA secondary structures generated during DNA repair and recombination. Has endonuclease activity towards branched DNA substrates, introducing single-strand cuts in duplex DNA close to junctions with ss-DNA (Potential). Has a preference for replication forks over 5' flap structures or Holliday junctions and shows much lower activity toward 3' flap structures. Required for proper crossover distribution through inhibition of crossover formation at the central region of chromosomes. This chain is Structure-specific endonuclease subunit SLX1 homolog, found in Caenorhabditis briggsae.